The primary structure comprises 245 residues: Probable 2-phosphosulfolactate phosphatase (245 aa).

It belongs to the ComB family. Requires Mg(2+) as cofactor.

It carries out the reaction (2R)-O-phospho-3-sulfolactate + H2O = (2R)-3-sulfolactate + phosphate. In Synechococcus sp. (strain RCC307), this protein is Probable 2-phosphosulfolactate phosphatase.